The sequence spans 460 residues: Chromosomal replication initiator protein DnaA 2 (460 aa).

The tract at residues 1 to 68 (MRAWEDFLLL…KTSLVNNNGK (68 aa)) is domain I, interacts with DnaA modulators. Residues 68 to 102 (KLIRVHITSLDKTAPFYKEKQIQQEKTAYFTMQYG) form a domain II region. Positions 103 to 321 (NVNPEMTFGN…DALKLLSKRV (219 aa)) are domain III, AAA+ region. ATP is bound by residues Gly151, Gly153, Lys154, and Thr155. The interval 322–460 (AYKKLAQQLL…EFFPEEEISC (139 aa)) is domain IV, binds dsDNA.

This sequence belongs to the DnaA family. As to quaternary structure, oligomerizes as a right-handed, spiral filament on DNA at oriC.

It localises to the cytoplasm. Functionally, plays an essential role in the initiation and regulation of chromosomal replication. ATP-DnaA binds to the origin of replication (oriC) to initiate formation of the DNA replication initiation complex once per cell cycle. Binds the DnaA box (a 9 base pair repeat at the origin) and separates the double-stranded (ds)DNA. Forms a right-handed helical filament on oriC DNA; dsDNA binds to the exterior of the filament while single-stranded (ss)DNA is stabiized in the filament's interior. The ATP-DnaA-oriC complex binds and stabilizes one strand of the AT-rich DNA unwinding element (DUE), permitting loading of DNA polymerase. After initiation quickly degrades to an ADP-DnaA complex that is not apt for DNA replication. Binds acidic phospholipids. This chain is Chromosomal replication initiator protein DnaA 2, found in Chlamydia caviae (strain ATCC VR-813 / DSM 19441 / 03DC25 / GPIC) (Chlamydophila caviae).